Here is a 154-residue protein sequence, read N- to C-terminus: Endoribonuclease YbeY (154 aa).

3 residues coordinate Zn(2+): His113, His117, and His123.

Belongs to the endoribonuclease YbeY family. The cofactor is Zn(2+).

The protein localises to the cytoplasm. Single strand-specific metallo-endoribonuclease involved in late-stage 70S ribosome quality control and in maturation of the 3' terminus of the 16S rRNA. The chain is Endoribonuclease YbeY from Aeromonas salmonicida (strain A449).